The chain runs to 375 residues: uncharacterized protein (375 aa).

Residues 1–12 (MAGNKKQVKKNT) are compositionally biased toward basic residues. Disordered regions lie at residues 1-76 (MAGN…EKKS) and 119-274 (KNKN…KEIK). The segment covering 26–39 (DTSNLDTAVQTSAS) has biased composition (polar residues). Over residues 129–141 (TATDGTTTTTNIP) the composition is skewed to low complexity. Residues 175–185 (DETHSHKEEPK) are compositionally biased toward basic and acidic residues. 2 stretches are compositionally biased toward low complexity: residues 198 to 212 (SKQQ…SSSS) and 225 to 241 (PTPT…KSTP). Over residues 256-274 (EQPKEKSSPAPVKKEKEIK) the composition is skewed to basic and acidic residues. The next 2 helical transmembrane spans lie at 299 to 319 (VVYK…LVPL) and 327 to 347 (IYSY…TLFI). The disordered stretch occupies residues 355-375 (ASKEQKSKSGNKKSTTRKVKA). The span at 363-375 (SGNKKSTTRKVKA) shows a compositional bias: basic residues.

The protein localises to the membrane. This is an uncharacterized protein from Dictyostelium discoideum (Social amoeba).